Consider the following 360-residue polypeptide: Phosphoserine aminotransferase (360 aa).

Arg-42 contributes to the L-glutamate binding site. Pyridoxal 5'-phosphate contacts are provided by residues 76–77, Trp-102, Thr-153, Asp-172, and Gln-195; that span reads AR. N6-(pyridoxal phosphate)lysine is present on Lys-196. 237 to 238 provides a ligand contact to pyridoxal 5'-phosphate; the sequence is NT.

Belongs to the class-V pyridoxal-phosphate-dependent aminotransferase family. SerC subfamily. In terms of assembly, homodimer. Pyridoxal 5'-phosphate is required as a cofactor.

The protein resides in the cytoplasm. The enzyme catalyses O-phospho-L-serine + 2-oxoglutarate = 3-phosphooxypyruvate + L-glutamate. It catalyses the reaction 4-(phosphooxy)-L-threonine + 2-oxoglutarate = (R)-3-hydroxy-2-oxo-4-phosphooxybutanoate + L-glutamate. Its pathway is amino-acid biosynthesis; L-serine biosynthesis; L-serine from 3-phospho-D-glycerate: step 2/3. The protein operates within cofactor biosynthesis; pyridoxine 5'-phosphate biosynthesis; pyridoxine 5'-phosphate from D-erythrose 4-phosphate: step 3/5. Functionally, catalyzes the reversible conversion of 3-phosphohydroxypyruvate to phosphoserine and of 3-hydroxy-2-oxo-4-phosphonooxybutanoate to phosphohydroxythreonine. This chain is Phosphoserine aminotransferase, found in Photobacterium profundum (strain SS9).